Here is a 337-residue protein sequence, read N- to C-terminus: Monoacylglycerol lipase ABHD6 (337 aa).

Over 1–8 (MDLDVVNM) the chain is Extracellular. Residues 9–29 (FVIAGGTLAIPILAFVASFLL) form a helical; Signal-anchor for type II membrane protein membrane-spanning segment. Over 30-337 (WPSALIRIYY…HNTDNNKKLD (308 aa)) the chain is Cytoplasmic. Residues 72 to 313 (PSILMLHGFS…CGHSVVMERP (242 aa)) enclose the AB hydrolase-1 domain. Residue phenylalanine 80 participates in (9Z)-octadecenoate binding. The Nucleophile role is filled by serine 148. Methionine 149 lines the (9Z)-octadecenoate pocket. Residues aspartate 278 and histidine 306 each act as charge relay system in the active site. Histidine 306 contributes to the (9Z)-octadecenoate binding site.

This sequence belongs to the AB hydrolase superfamily.

It localises to the late endosome membrane. It is found in the lysosome membrane. Its subcellular location is the mitochondrion membrane. It carries out the reaction Hydrolyzes glycerol monoesters of long-chain fatty acids.. It catalyses the reaction 1-octanoylglycerol + H2O = octanoate + glycerol + H(+). The catalysed reaction is 1-decanoylglycerol + H2O = decanoate + glycerol + H(+). The enzyme catalyses 1-dodecanoylglycerol + H2O = dodecanoate + glycerol + H(+). It carries out the reaction 1-tetradecanoylglycerol + H2O = tetradecanoate + glycerol + H(+). It catalyses the reaction 2-hexadecanoylglycerol + H2O = glycerol + hexadecanoate + H(+). The catalysed reaction is 2-(9Z-octadecenoyl)-glycerol + H2O = glycerol + (9Z)-octadecenoate + H(+). The enzyme catalyses 1-(9Z-octadecenoyl)-glycerol + H2O = glycerol + (9Z)-octadecenoate + H(+). It carries out the reaction 2-(9Z,12Z-octadecadienoyl)-glycerol + H2O = (9Z,12Z)-octadecadienoate + glycerol + H(+). It catalyses the reaction 2-(5Z,8Z,11Z,14Z-eicosatetraenoyl)-glycerol + H2O = glycerol + (5Z,8Z,11Z,14Z)-eicosatetraenoate + H(+). The catalysed reaction is 1-(5Z,8Z,11Z,14Z-eicosatetraenoyl)-glycerol + H2O = glycerol + (5Z,8Z,11Z,14Z)-eicosatetraenoate + H(+). The enzyme catalyses 1-(9Z,12Z-octadecadienoyl)-glycerol + H2O = (9Z,12Z)-octadecadienoate + glycerol + H(+). It carries out the reaction 3-(9Z-octadecenoyl)-sn-glycero-1-phospho-(3'-(9Z-octadecenoyl)-1'-sn-glycerol) + H2O = 3-(9Z-octadecenoyl)-sn-glycero-1-phospho-(1'-sn-glycerol) + (9Z)-octadecenoate + H(+). It catalyses the reaction (S,S)-2-(9Z-octadecenoyl)-sn-glycero-1-phospho-(2'-(9Z-octadecenoyl)-1'-sn-glycerol) + H2O = (S,S)-2-(9Z-octadecenoyl)-sn-glycero-1-phospho-(1'-sn-glycerol) + (9Z)-octadecenoate + H(+). The catalysed reaction is (R,R)-2-(9Z-octadecenoyl)-sn-glycero-3-phospho-(2'-(9Z-octadecenoyl)-3'-sn-glycerol) + H2O = (R,R)-2-(9Z-octadecenoyl)-sn-glycero-3-phospho-(3'-sn-glycerol) + (9Z)-octadecenoate + H(+). Lipase that preferentially hydrolysis medium-chain saturated monoacylglycerols including 2-arachidonoylglycerol. Through 2-arachidonoylglycerol degradation may regulate endocannabinoid signaling pathways. Also has a lysophosphatidyl lipase activity with a preference for lysophosphatidylglycerol among other lysophospholipids. Also able to degrade bis(monoacylglycero)phosphate (BMP) and constitutes the major enzyme for BMP catabolism. BMP, also known as lysobisphosphatidic acid, is enriched in late endosomes and lysosomes and plays a key role in the formation of intraluminal vesicles and in lipid sorting. The protein is Monoacylglycerol lipase ABHD6 of Homo sapiens (Human).